The sequence spans 259 residues: Probable ABC transporter permease protein RBE_1340 (259 aa).

The next 5 membrane-spanning stretches (helical) occupy residues 25–45, 49–69, 148–168, 195–215, and 237–257; these read IFSL…SLII, LFIG…SGAV, VIAA…IGVM, PIDV…ISII, and AVVN…ELFF.

This sequence belongs to the MlaE permease family.

The protein localises to the cell inner membrane. Its function is as follows. Could be part of an ABC transporter complex. This Rickettsia bellii (strain RML369-C) protein is Probable ABC transporter permease protein RBE_1340.